A 292-amino-acid polypeptide reads, in one-letter code: DCN1-like protein 4 (292 aa).

The interval His-43–Asp-83 is disordered. Over residues Thr-45–Cys-56 the composition is skewed to polar residues. A Glycyl lysine isopeptide (Lys-Gly) (interchain with G-Cter in SUMO2) cross-link involves residue Lys-95. Residues Phe-101–Lys-287 enclose the DCUN1 domain.

As to quaternary structure, interacts (via the DCUN1 domain) with the unneddylated cullins: interacts with CUL1, CUL2, CUL3, CUL4A, CUL4B and CUL5; these interactions promote the cullin neddylation and the identity of the cullin dictates the affinity of the interaction. Interacts with RBX1 and RNF7. Interacts with CAND1; this interaction is bridged by cullins such as CUL3 and strongly inhibits the neddylation of CUL3. These CAND-cullin-DCNL complexes can only be neddylated in the presence of a substrate adapter. Interacts (via DCUN1 domain) with UBE2M (N-terminally acetylated form) and probably with UBE2F (N-terminally acetylated form).

Its subcellular location is the nucleus. Its function is as follows. Contributes to the neddylation of all cullins by transferring NEDD8 from N-terminally acetylated NEDD8-conjugating E2s enzyme to different cullin C-terminal domain-RBX complexes which are necessary for the activation of cullin-RING E3 ubiquitin ligases (CRLs). The polypeptide is DCN1-like protein 4 (Homo sapiens (Human)).